A 22-amino-acid chain; its full sequence is FKSWSFCTPGCAKTGSFNSYCC.

The segment at residues 3-7 (SWSFC) is a cross-link (lanthionine (Ser-Cys)). Ser-5 bears the 2,3-didehydroalanine (Ser) mark. A cross-link (beta-methyllanthionine (Thr-Cys)) is located at residues 8-11 (TPGC). Thr-14 bears the 2,3-didehydrobutyrine mark. A cross-link (lanthionine (Ser-Cys)) is located at residues 16 to 21 (SFNSYC). The S-(2-aminovinyl)-D-cysteine (Ser-Cys) cross-link spans 19 to 22 (SYCC).

Maturation of lantibiotics involves the enzymatic conversion of Thr, and Ser into dehydrated AA and the formation of thioether bonds with cysteine. The C-terminal lanthionine undergoes decarboxylation. This is followed by membrane translocation and cleavage of the modified precursor. In terms of processing, it is not established whether the 2,3-didehydrobutyrine is the E- or Z-isomer.

Lanthionine-containing peptide antibiotic (lantibiotic) active on Gram-positive bacteria. The bactericidal activity of lantibiotics is based on depolarization of energized bacterial cytoplasmic membranes, initiated by the formation of aqueous transmembrane pores. The protein is Lantibiotic mutacin B-Ny266 of Streptococcus mutans.